Reading from the N-terminus, the 409-residue chain is Microfibrillar-associated protein 3-like (409 aa).

Residues Met-1–Ala-28 form the signal peptide. Residues Lys-29–Asp-148 lie on the Extracellular side of the membrane. Asn-33, Asn-37, Asn-67, Asn-111, and Asn-135 each carry an N-linked (GlcNAc...) asparagine glycan. In terms of domain architecture, Ig-like C2-type spans Pro-47–Arg-141. Cys-68 and Cys-125 form a disulfide bridge. The chain crosses the membrane as a helical span at residues Met-149 to Ile-169. Topologically, residues Thr-170–Val-409 are cytoplasmic. Tyr-287 carries the phosphotyrosine modification. Phosphoserine occurs at positions 298, 303, 306, and 307. The segment at Val-319–Val-395 is disordered. The segment covering Ser-325–Val-340 has biased composition (basic and acidic residues). Positions Thr-356–Thr-373 are enriched in low complexity.

It is found in the cell membrane. The protein resides in the nucleus. It localises to the cytoplasm. May participate in the nuclear signaling of EGFR and MAPK1/ERK2. The chain is Microfibrillar-associated protein 3-like (Mfap3l) from Mus musculus (Mouse).